We begin with the raw amino-acid sequence, 76 residues long: MENKLSFEEAISQLEHLVSKLEQGDVPLEEAISYFKEGMELSKLCDEKLKNVQEQMAVILGEDGELEPFTALGDEA.

The protein belongs to the XseB family. Heterooligomer composed of large and small subunits.

The protein resides in the cytoplasm. It carries out the reaction Exonucleolytic cleavage in either 5'- to 3'- or 3'- to 5'-direction to yield nucleoside 5'-phosphates.. Functionally, bidirectionally degrades single-stranded DNA into large acid-insoluble oligonucleotides, which are then degraded further into small acid-soluble oligonucleotides. The sequence is that of Exodeoxyribonuclease 7 small subunit from Bacillus cereus (strain ATCC 14579 / DSM 31 / CCUG 7414 / JCM 2152 / NBRC 15305 / NCIMB 9373 / NCTC 2599 / NRRL B-3711).